We begin with the raw amino-acid sequence, 411 residues long: Glutamate dehydrogenase 2, mitochondrial (411 aa).

The transit peptide at 1 to 18 (MNALAATSRNFRQAARLL) directs the protein to the mitochondrion. The active site involves lysine 102.

It belongs to the Glu/Leu/Phe/Val dehydrogenases family. Expressed in roots. Expressed ubiquitously in various tissues.

The protein localises to the mitochondrion. It catalyses the reaction L-glutamate + NAD(+) + H2O = 2-oxoglutarate + NH4(+) + NADH + H(+). It carries out the reaction L-glutamate + NADP(+) + H2O = 2-oxoglutarate + NH4(+) + NADPH + H(+). The sequence is that of Glutamate dehydrogenase 2, mitochondrial (GDH2) from Oryza sativa subsp. japonica (Rice).